Consider the following 132-residue polypeptide: Large ribosomal subunit protein bL17 (132 aa).

This sequence belongs to the bacterial ribosomal protein bL17 family. In terms of assembly, part of the 50S ribosomal subunit. Contacts protein L32.

The protein is Large ribosomal subunit protein bL17 of Saccharophagus degradans (strain 2-40 / ATCC 43961 / DSM 17024).